An 877-amino-acid polypeptide reads, in one-letter code: Telomere length regulation protein clk-2 (877 aa).

Residues 488-501 (NKDSAAITSKNNLR) show a composition bias toward polar residues. Residues 488 to 509 (NKDSAAITSKNNLRLDSDDDED) form a disordered region.

It belongs to the TEL2 family.

The protein localises to the nucleus. It is found in the chromosome. The protein resides in the telomere. DNA damage checkpoint protein required for DNA damage-induced cell cycle arrest and apoptosis, thereby playing a role in genome stability. Regulator of telomere length. This Caenorhabditis elegans protein is Telomere length regulation protein clk-2 (clk-2).